The primary structure comprises 474 residues: Hepatocyte nuclear factor 4-alpha (474 aa).

A DNA-binding region (nuclear receptor) is located at residues 57-132 (SALCAICGDR…AGMKKEAVQN (76 aa)). 2 NR C4-type zinc fingers span residues 60 to 80 (CAIC…CDGC) and 96 to 120 (CRFS…LKKC). Ser142 and Ser143 each carry phosphoserine. Residue Tyr144 is modified to Phosphotyrosine. The NR LBD domain occupies 147 to 377 (SSLPSINALL…NLLQEMLLGG (231 aa)). A Phosphothreonine modification is found at Thr166. Phosphoserine is present on Ser167. Glycyl lysine isopeptide (Lys-Gly) (interchain with G-Cter in ubiquitin) cross-links involve residues Lys234 and Lys307. Ser313 carries the phosphoserine; by AMPK modification. The 9aaTAD signature appears at 368–376 (NLLQEMLLG). The tract at residues 413–450 (SNGQMCEWPRPRGQAATPETPQPSPPSGSGSESYKLLP) is disordered. Phosphothreonine occurs at positions 429 and 432. Ser436 carries the post-translational modification Phosphoserine. N6-acetyllysine is present on Lys458.

The protein belongs to the nuclear hormone receptor family. NR2 subfamily. As to quaternary structure, homodimerization is required for HNF4-alpha to bind to its recognition site. Interacts with CLOCK, BMAL1 and PER1. Interacts with PER2. Interacts with CRY1 and CRY2. Interacts with NR0B2/SHP; the resulting heterodimer is transcriptionally inactive. Interacts with DDX3X; this interaction disrupts the interaction between HNF4 and NR0B2 that forms inactive heterodimers and enhances the formation of active HNF4 homodimers. Phosphorylated on tyrosine residue(s); phosphorylation is important for its DNA-binding activity. Phosphorylation may directly or indirectly play a regulatory role in the subnuclear distribution. Phosphorylation at Ser-313 by AMPK reduces the ability to form homodimers and bind DNA. In terms of processing, acetylation at Lys-458 lowers transcriptional activation by about two-fold. In terms of tissue distribution, expressed in the liver, pancreas and colon in a circadian manner.

Its subcellular location is the nucleus. Transcriptional regulator which controls the expression of hepatic genes during the transition of endodermal cells to hepatic progenitor cells, facilitatating the recruitment of RNA pol II to the promoters of target genes. Activates the transcription of CYP2C38. Represses the CLOCK-BMAL1 transcriptional activity and is essential for circadian rhythm maintenance and period regulation in the liver and colon cells. The protein is Hepatocyte nuclear factor 4-alpha (Hnf4a) of Mus musculus (Mouse).